The primary structure comprises 275 residues: Bis(5'-nucleosyl)-tetraphosphatase, symmetrical (275 aa).

It belongs to the Ap4A hydrolase family.

It catalyses the reaction P(1),P(4)-bis(5'-adenosyl) tetraphosphate + H2O = 2 ADP + 2 H(+). Its function is as follows. Hydrolyzes diadenosine 5',5'''-P1,P4-tetraphosphate to yield ADP. The sequence is that of Bis(5'-nucleosyl)-tetraphosphatase, symmetrical from Marinomonas sp. (strain MWYL1).